The sequence spans 129 residues: Follitropin subunit beta (129 aa).

Residues 1–20 (MKTVQFCFLFCCWKAICCNS) form the signal peptide. Disulfide bonds link C21-C69, C35-C84, C38-C122, C46-C100, C50-C102, and C105-C112. Residues N25 and N42 are each glycosylated (N-linked (GlcNAc...) asparagine).

The protein belongs to the glycoprotein hormones subunit beta family. In terms of assembly, heterodimer. The active follitropin is a heterodimer composed of an alpha chain/CGA shared with other hormones and a unique beta chain/FSHB shown here.

It localises to the secreted. Together with the alpha chain CGA constitutes follitropin, the follicle-stimulating hormone, and provides its biological specificity to the hormone heterodimer. Binds FSHR, a G protein-coupled receptor, on target cells to activate downstream signaling pathways. Follitropin is involved in follicle development and spermatogenesis in reproductive organs. The chain is Follitropin subunit beta (FSHB) from Aotus nancymaae (Ma's night monkey).